Consider the following 142-residue polypeptide: Large ribosomal subunit protein uL13 (142 aa).

Belongs to the universal ribosomal protein uL13 family. As to quaternary structure, part of the 50S ribosomal subunit.

Its function is as follows. This protein is one of the early assembly proteins of the 50S ribosomal subunit, although it is not seen to bind rRNA by itself. It is important during the early stages of 50S assembly. In Pectobacterium carotovorum subsp. carotovorum (strain PC1), this protein is Large ribosomal subunit protein uL13.